A 200-amino-acid polypeptide reads, in one-letter code: Protein GrpE (200 aa).

Residues 1-27 show a composition bias toward basic and acidic residues; that stretch reads MTKQEKAENQEKPTEETVEETPKKETP. Residues 1–50 are disordered; the sequence is MTKQEKAENQEKPTEETVEETPKKETPFEPVMEADEVEETTEAQAPVEEA. The segment covering 32–41 has biased composition (acidic residues); sequence MEADEVEETT.

This sequence belongs to the GrpE family. As to quaternary structure, homodimer.

The protein resides in the cytoplasm. Its function is as follows. Participates actively in the response to hyperosmotic and heat shock by preventing the aggregation of stress-denatured proteins, in association with DnaK and GrpE. It is the nucleotide exchange factor for DnaK and may function as a thermosensor. Unfolded proteins bind initially to DnaJ; upon interaction with the DnaJ-bound protein, DnaK hydrolyzes its bound ATP, resulting in the formation of a stable complex. GrpE releases ADP from DnaK; ATP binding to DnaK triggers the release of the substrate protein, thus completing the reaction cycle. Several rounds of ATP-dependent interactions between DnaJ, DnaK and GrpE are required for fully efficient folding. This chain is Protein GrpE, found in Latilactobacillus sakei subsp. sakei (strain 23K) (Lactobacillus sakei subsp. sakei).